The following is a 38-amino-acid chain: Large ribosomal subunit protein bL36 (38 aa).

The protein belongs to the bacterial ribosomal protein bL36 family.

The protein is Large ribosomal subunit protein bL36 of Paraburkholderia phymatum (strain DSM 17167 / CIP 108236 / LMG 21445 / STM815) (Burkholderia phymatum).